We begin with the raw amino-acid sequence, 235 residues long: Large ribosomal subunit protein uL1 (235 aa).

It belongs to the universal ribosomal protein uL1 family. In terms of assembly, part of the 50S ribosomal subunit.

Binds directly to 23S rRNA. The L1 stalk is quite mobile in the ribosome, and is involved in E site tRNA release. Its function is as follows. Protein L1 is also a translational repressor protein, it controls the translation of the L11 operon by binding to its mRNA. This Rhodospirillum centenum (strain ATCC 51521 / SW) protein is Large ribosomal subunit protein uL1.